Here is a 189-residue protein sequence, read N- to C-terminus: GTPase NRas (189 aa).

Residues 10-18 and 29-30 contribute to the GTP site; these read GAGGVGKSA and VD. The short motif at 32–40 is the Effector region element; that stretch reads YDPTIEDSY. 57–61 contributes to the GTP binding site; the sequence is DTAGQ. Ser-89 is modified (phosphoserine). 116-119 is a GTP binding site; that stretch reads NKCD. The segment at 166–185 is hypervariable region; sequence YRMKKLNSSDDGTQGCMGLP. Lys-170 participates in a covalent cross-link: Glycyl lysine isopeptide (Lys-Gly) (interchain with G-Cter in ubiquitin). Residue Cys-181 is the site of S-palmitoyl cysteine attachment. Residue Cys-186 is the site of S-farnesyl cysteine attachment. Residues 187–189 constitute a propeptide, removed in mature form; sequence VVM.

Belongs to the small GTPase superfamily. Ras family. In terms of assembly, interacts (active GTP-bound form preferentially) with RGS14. Interacts (active GTP-bound form) with RASSF7. Interacts (active GTP-bound form) with both SHOC2 and PP1c (all isoforms) to form a tertiary complex; SHOC2 and PP1c preferably bind M-Ras/MRAS, but they also bind K-Ras/KRAS, N-Ras/NRAS and H-Ras/HRAS. In terms of processing, palmitoylated by the ZDHHC9-GOLGA7 complex. Depalmitoylated by ABHD17A, ABHD17B and ABHD17C. A continuous cycle of de- and re-palmitoylation regulates rapid exchange between plasma membrane and Golgi. Acetylation at Lys-104 prevents interaction with guanine nucleotide exchange factors (GEFs). Post-translationally, ubiquitinated by the BCR(LZTR1) E3 ubiquitin ligase complex at Lys-170 in a non-degradative manner, leading to inhibit Ras signaling by decreasing Ras association with membranes. In terms of processing, phosphorylation at Ser-89 enhances NRAS association with its downstream effectors.

It is found in the cell membrane. The protein resides in the golgi apparatus membrane. It catalyses the reaction GTP + H2O = GDP + phosphate + H(+). Alternates between an inactive form bound to GDP and an active form bound to GTP. Activated by a guanine nucleotide-exchange factor (GEF) and inactivated by a GTPase-activating protein (GAP). Its function is as follows. Ras proteins bind GDP/GTP and possess intrinsic GTPase activity. This chain is GTPase NRas (NRAS), found in Pongo abelii (Sumatran orangutan).